The primary structure comprises 75 residues: Microcin H47 (75 aa).

A propeptide spanning residues 1-15 is cleaved from the precursor; it reads MREITESQLRYISGA. Residues 30–50 form a helical membrane-spanning segment; sequence AIVGALAGIPGGPLGVVVGAV.

Its subcellular location is the secreted. It localises to the host cell membrane. Its function is as follows. Bactericidal antibiotic. Active on bacteria phylogenetically related to the producing strain. This chain is Microcin H47 (mchB), found in Escherichia coli O6:H1 (strain CFT073 / ATCC 700928 / UPEC).